The chain runs to 872 residues: Alanine--tRNA ligase (872 aa).

His-563, His-567, Cys-665, and His-669 together coordinate Zn(2+).

This sequence belongs to the class-II aminoacyl-tRNA synthetase family. The cofactor is Zn(2+).

It is found in the cytoplasm. It catalyses the reaction tRNA(Ala) + L-alanine + ATP = L-alanyl-tRNA(Ala) + AMP + diphosphate. Catalyzes the attachment of alanine to tRNA(Ala) in a two-step reaction: alanine is first activated by ATP to form Ala-AMP and then transferred to the acceptor end of tRNA(Ala). Also edits incorrectly charged Ser-tRNA(Ala) and Gly-tRNA(Ala) via its editing domain. In Bacteroides fragilis (strain YCH46), this protein is Alanine--tRNA ligase.